The primary structure comprises 57 residues: Large ribosomal subunit protein bL32 (57 aa).

Residues 1–19 (MAVPKRRMSRSNTRSRRSQ) show a composition bias toward basic residues. The segment at 1–21 (MAVPKRRMSRSNTRSRRSQWK) is disordered.

It belongs to the bacterial ribosomal protein bL32 family.

This chain is Large ribosomal subunit protein bL32, found in Mycobacteroides abscessus (strain ATCC 19977 / DSM 44196 / CCUG 20993 / CIP 104536 / JCM 13569 / NCTC 13031 / TMC 1543 / L948) (Mycobacterium abscessus).